Here is a 364-residue protein sequence, read N- to C-terminus: 4-hydroxythreonine-4-phosphate dehydrogenase (364 aa).

Residues H148 and T149 each contribute to the substrate site. Residues H177, H216, and H301 each contribute to the a divalent metal cation site. K309, N318, and R327 together coordinate substrate.

The protein belongs to the PdxA family. As to quaternary structure, homodimer. The cofactor is Zn(2+). Mg(2+) serves as cofactor. Requires Co(2+) as cofactor.

Its subcellular location is the cytoplasm. The catalysed reaction is 4-(phosphooxy)-L-threonine + NAD(+) = 3-amino-2-oxopropyl phosphate + CO2 + NADH. The protein operates within cofactor biosynthesis; pyridoxine 5'-phosphate biosynthesis; pyridoxine 5'-phosphate from D-erythrose 4-phosphate: step 4/5. Catalyzes the NAD(P)-dependent oxidation of 4-(phosphooxy)-L-threonine (HTP) into 2-amino-3-oxo-4-(phosphooxy)butyric acid which spontaneously decarboxylates to form 3-amino-2-oxopropyl phosphate (AHAP). The sequence is that of 4-hydroxythreonine-4-phosphate dehydrogenase from Campylobacter jejuni subsp. jejuni serotype O:2 (strain ATCC 700819 / NCTC 11168).